Consider the following 248-residue polypeptide: MLHSKRREYTANNQDVTYTELKTCKSPWKHRIPTVKQSPVVLCEEQLKYGELTFHRTPQPQPRKQAMGRKRQGPKSTVWRVVTGMLGALCVVLMTTTGILLPKLFSSQEEQCRKTSLHPLRCPKDDASCDLCSSDWIAFGNNFYCVFKENTKTWAESQSACEELNSHLVIIDSKAEVENLLLFEMDGWILHKMDGTNSSWLWRNDIKIQNTLTNDSEKKNHSCHYLRGNLFMPDECSAKKSYICEFNI.

Residues 1-80 (MLHSKRREYT…RQGPKSTVWR (80 aa)) lie on the Cytoplasmic side of the membrane. 2 short sequence motifs (ITIM motif) span residues 16–21 (VTYTEL) and 47–52 (LKYGEL). A helical; Signal-anchor for type II membrane protein transmembrane segment spans residues 81–101 (VVTGMLGALCVVLMTTTGILL). The Extracellular portion of the chain corresponds to 102 to 248 (PKLFSSQEEQ…KKSYICEFNI (147 aa)). 3 cysteine pairs are disulfide-bonded: Cys-132-Cys-145, Cys-161-Cys-244, and Cys-223-Cys-236. The C-type lectin domain maps to 139 to 245 (FGNNFYCVFK…CSAKKSYICE (107 aa)). Asn-197, Asn-214, and Asn-220 each carry an N-linked (GlcNAc...) asparagine glycan.

As to quaternary structure, heterodimer with KLRE1. Interacts with PTPN6. Expressed in natural killer (NK) cells.

The protein localises to the cell membrane. In terms of biological role, lectin-like receptor for natural killer (NK) cells. Heterodimer formation with KLRE1 mediates inhibition of NK cell cytolytic activity. The protein is Killer cell lectin-like receptor subfamily I member 1 of Mus musculus (Mouse).